We begin with the raw amino-acid sequence, 259 residues long: AM-toxin biosynthesis protein 11 (259 aa).

Residues 39–66 (RRSRRRPEEESIQSLSKHVSTTTQPCPT) are disordered. Residues 50–64 (IQSLSKHVSTTTQPC) are compositionally biased toward polar residues.

Its pathway is mycotoxin biosynthesis. Part of the gene clusters that mediate the biosynthesis of AM-toxins, host-selective toxins (HSTs) causing Alternaria blotch on apple, a worldwide distributed disease. AM-toxins are cyclic depsipeptides containing the 3 residues 2-hydroxy-isovaleric acid (2-HIV), dehydroalanine, L-alanine which are common for all 3 AM-toxins I to III. The fourth precursor is L-alpha-amino-methoxyphenyl-valeric acid (L-Amv) for AM-toxin I, L-alpha-amino-phenyl-valeric acid (L-Apv) for AM-toxin II, and L-alpha-amino-hydroxyphenyl-valeric acid (L-Ahv) for AM-toxin III. AM-toxins have two target sites for affecting susceptible apple cells; they cause invagination of the plasma membrane and electrolyte loss and chloroplast disorganization. The non-ribosomal peptide synthetase AMT1 contains 4 catalytic modules and is responsible for activation of each residue in AM-toxin. The aldo-keto reductase AMT2 catalyzes the conversion of 2-keto-isovaleric acid (2-KIV) to 2-hydroxy-isovaleric acid (2-HIV), one of the precursor residues incorporated by AMT1 during AM-toxin biosynthesis, by reduction of its ketone to an alcohol. The cytochrome P450 monooxygenase AMT3 and the thioesterase AMT4 are also important for AM-toxin production, but their exact function within the AM-toxin biosynthesis are not known yet. Up to 21 proteins (including AMT1 to AMT4) are predicted to be involved in AM-toxin biosynthesis since their expression ishighly up-regulated in AM-toxin-producing cultures. The chain is AM-toxin biosynthesis protein 11 from Alternaria alternata (Alternaria rot fungus).